A 236-amino-acid polypeptide reads, in one-letter code: Factor V activator RVV-V alpha (236 aa).

A Peptidase S1 domain is found at 1 to 227 (VVGGDECNIN…YNNWIQNIIA (227 aa)). 6 cysteine pairs are disulfide-bonded: Cys-7–Cys-141, Cys-28–Cys-44, Cys-76–Cys-234, Cys-120–Cys-188, Cys-152–Cys-167, and Cys-178–Cys-203. Active-site charge relay system residues include His-43 and Asp-88. The active-site Charge relay system is the Ser-182. Residue Asn-229 is glycosylated (N-linked (GlcNAc...) asparagine).

This sequence belongs to the peptidase S1 family. Snake venom subfamily. In terms of assembly, monomer. As to expression, expressed by the venom gland.

It localises to the secreted. It catalyses the reaction Fully activates human clotting factor V by a single cleavage at the 1545-Trp-Tyr-Leu-Arg-|-Ser-Asn-Asn-Gly-1552 bond. Cattle, but not rabbit, factor V is cleaved, and no other proteins of the clotting system are attacked. Esterase activity is observed on Bz-Arg-OEt and Tos-Arg-OMe, and amidase activity on Phe-pipecolyl-Arg-NHPhNO2.. With respect to regulation, inhibited by D-Phe-Pro-Arg-chloromethyl ketone (FPRCK) (97%), PMSF (76%), and benzamidine (50%). Is not inhibited by BPTI, antithrombin and EDTA. Its function is as follows. Venom serine protease that activates factor V (F5) in a calcium-independent manner. It cleaves the Arg(1545)-Ser(1546) linkage in the human factor V molecule. Induces the coagulation of mammalian plasma. The chain is Factor V activator RVV-V alpha from Daboia siamensis (Eastern Russel's viper).